A 484-amino-acid polypeptide reads, in one-letter code: ATP synthase subunit beta, chloroplastic (484 aa).

Glycine 163–threonine 170 serves as a coordination point for ATP.

It belongs to the ATPase alpha/beta chains family. As to quaternary structure, F-type ATPases have 2 components, CF(1) - the catalytic core - and CF(0) - the membrane proton channel. CF(1) has five subunits: alpha(3), beta(3), gamma(1), delta(1), epsilon(1). CF(0) has four main subunits: a(1), b(1), b'(1) and c(9-12).

It localises to the plastid. The protein localises to the chloroplast thylakoid membrane. The catalysed reaction is ATP + H2O + 4 H(+)(in) = ADP + phosphate + 5 H(+)(out). Functionally, produces ATP from ADP in the presence of a proton gradient across the membrane. The catalytic sites are hosted primarily by the beta subunits. The chain is ATP synthase subunit beta, chloroplastic from Stigeoclonium helveticum (Green alga).